Reading from the N-terminus, the 357-residue chain is Trans-resveratrol di-O-methyltransferase (357 aa).

S-adenosyl-L-methionine is bound by residues G200, D223, D243, M244, and K257. The active-site Proton acceptor is the H261.

This sequence belongs to the class I-like SAM-binding methyltransferase superfamily. Cation-independent O-methyltransferase family. COMT subfamily.

It carries out the reaction trans-resveratrol + 2 S-adenosyl-L-methionine = pterostilbene + 2 S-adenosyl-L-homocysteine + 2 H(+). Functionally, catalyzes the biosynthesis of pterostilbene from resveratrol. Pterostilbene has both antifungal and pharmacological properties. Also has activity toward resveratrol monomethyl ether (RME). This is Trans-resveratrol di-O-methyltransferase (ROMT) from Vitis vinifera (Grape).